We begin with the raw amino-acid sequence, 543 residues long: Chaperonin GroEL (543 aa).

ATP is bound by residues 29–32 (TLGP), 86–90 (DGTTT), glycine 413, 477–479 (DAL), and aspartate 493.

This sequence belongs to the chaperonin (HSP60) family. Forms a cylinder of 14 subunits composed of two heptameric rings stacked back-to-back. Interacts with the co-chaperonin GroES.

Its subcellular location is the cytoplasm. It carries out the reaction ATP + H2O + a folded polypeptide = ADP + phosphate + an unfolded polypeptide.. In terms of biological role, together with its co-chaperonin GroES, plays an essential role in assisting protein folding. The GroEL-GroES system forms a nano-cage that allows encapsulation of the non-native substrate proteins and provides a physical environment optimized to promote and accelerate protein folding. In Clostridium botulinum, this protein is Chaperonin GroEL.